Here is a 402-residue protein sequence, read N- to C-terminus: Prophage integrase IntZ (402 aa).

The Core-binding (CB) domain maps to 103 to 183 (AGFKKVAEDW…RIGEIFKFAV (81 aa)). A Tyr recombinase domain is found at 206–381 (GHNAWIPISE…AYLKQRRAMM (176 aa)). Residues arginine 244, lysine 271, histidine 332, arginine 335, and histidine 359 contribute to the active site. Catalysis depends on tyrosine 368, which acts as the O-(3'-phospho-DNA)-tyrosine intermediate.

This sequence belongs to the 'phage' integrase family.

Integrase is necessary for integration of the phage into the host genome by site-specific recombination. In conjunction with excisionase, integrase is also necessary for excision of the prophage from the host genome. This is Prophage integrase IntZ (intZ) from Escherichia coli (strain K12).